Reading from the N-terminus, the 446-residue chain is Signal recognition particle protein (446 aa).

Residues G108–T115, D191–R195, and T249–D252 each bind GTP.

The protein belongs to the GTP-binding SRP family. SRP54 subfamily. As to quaternary structure, part of the signal recognition particle protein translocation system, which is composed of SRP and FtsY. Interacts with a small cytoplasmic RNA (sc-RNA).

Its subcellular location is the cytoplasm. The catalysed reaction is GTP + H2O = GDP + phosphate + H(+). In terms of biological role, involved in targeting and insertion of nascent membrane proteins into the cytoplasmic membrane. Binds to the hydrophobic signal sequence of the ribosome-nascent chain (RNC) as it emerges from the ribosomes. The SRP-RNC complex is then targeted to the cytoplasmic membrane where it interacts with the SRP receptor FtsY. Interaction with FtsY leads to the transfer of the RNC complex to the Sec translocase for insertion into the membrane, the hydrolysis of GTP by both Ffh and FtsY, and the dissociation of the SRP-FtsY complex into the individual components. The polypeptide is Signal recognition particle protein (Bacillus subtilis (strain 168)).